Here is a 197-residue protein sequence, read N- to C-terminus: Dephospho-CoA kinase (197 aa).

One can recognise a DPCK domain in the interval 5–197 (RLGLTGSIGM…IAHIRETADA (193 aa)). An ATP-binding site is contributed by 13 to 18 (GMGKST).

Belongs to the CoaE family.

It is found in the cytoplasm. It catalyses the reaction 3'-dephospho-CoA + ATP = ADP + CoA + H(+). Its pathway is cofactor biosynthesis; coenzyme A biosynthesis; CoA from (R)-pantothenate: step 5/5. Functionally, catalyzes the phosphorylation of the 3'-hydroxyl group of dephosphocoenzyme A to form coenzyme A. This chain is Dephospho-CoA kinase, found in Cereibacter sphaeroides (strain ATCC 17023 / DSM 158 / JCM 6121 / CCUG 31486 / LMG 2827 / NBRC 12203 / NCIMB 8253 / ATH 2.4.1.) (Rhodobacter sphaeroides).